Here is a 576-residue protein sequence, read N- to C-terminus: Protein O-linked-mannose beta-1,4-N-acetylglucosaminyltransferase 2 (576 aa).

At 1 to 4 (MNIS) the chain is on the cytoplasmic side. A helical; Signal-anchor for type II membrane protein membrane pass occupies residues 5-25 (AVFNALLVSIMAAVLWKHVKL). The Lumenal segment spans residues 26–576 (LEQFYVIEEE…PFAEVLVCNT (551 aa)). Residues asparagine 98, asparagine 275, asparagine 335, asparagine 451, asparagine 539, and asparagine 561 are each glycosylated (N-linked (GlcNAc...) asparagine). The Fibronectin type-III domain occupies 482–576 (RESKCQASAQ…PFAEVLVCNT (95 aa)).

The protein belongs to the glycosyltransferase 61 family.

It localises to the endoplasmic reticulum membrane. It catalyses the reaction 3-O-(alpha-D-mannosyl)-L-threonyl-[protein] + UDP-N-acetyl-alpha-D-glucosamine = 3-O-(N-acetyl-beta-D-glucosaminyl-(1-&gt;4)-alpha-D-mannosyl)-L-threonyl-[protein] + UDP + H(+). It functions in the pathway protein modification; protein glycosylation. Its function is as follows. O-linked mannose beta-1,4-N-acetylglucosaminyltransferase that transfers UDP-N-acetyl-D-glucosamine to the 4-position of the mannose to generate N-acetyl-D-glucosamine-beta-1,4-O-D-mannosylprotein. Involved in the biosynthesis of the phosphorylated O-mannosyl trisaccharide (N-acetylgalactosamine-beta-3-N-acetylglucosamine-beta-4-(phosphate-6-)mannose), a carbohydrate structure present in alpha-dystroglycan (DAG1), which is required for binding laminin G-like domain-containing extracellular proteins with high affinity. This chain is Protein O-linked-mannose beta-1,4-N-acetylglucosaminyltransferase 2 (pomgnt2), found in Xenopus tropicalis (Western clawed frog).